The chain runs to 170 residues: Shikimate kinase (170 aa).

11-16 (LSGKST) contributes to the ATP binding site. Ser-15 contributes to the Mg(2+) binding site. Substrate contacts are provided by Asp-33, Arg-57, and Gly-79. Arg-119 is a binding site for ATP. Residue Arg-137 coordinates substrate.

This sequence belongs to the shikimate kinase family. As to quaternary structure, monomer. Requires Mg(2+) as cofactor.

The protein localises to the cytoplasm. The catalysed reaction is shikimate + ATP = 3-phosphoshikimate + ADP + H(+). Its pathway is metabolic intermediate biosynthesis; chorismate biosynthesis; chorismate from D-erythrose 4-phosphate and phosphoenolpyruvate: step 5/7. Functionally, catalyzes the specific phosphorylation of the 3-hydroxyl group of shikimic acid using ATP as a cosubstrate. The chain is Shikimate kinase from Clostridium botulinum (strain Loch Maree / Type A3).